The following is a 161-amino-acid chain: uncharacterized protein (161 aa).

Residues 1–23 (MKKFAFLTALFAACYLPNAYAHA) constitute a signal peptide (or 21). The chain crosses the membrane as a helical span at residues 129 to 149 (IYLHDILGGIGYIVGIAGLIA).

It is found in the membrane. This is an uncharacterized protein from Haemophilus influenzae (strain ATCC 51907 / DSM 11121 / KW20 / Rd).